The sequence spans 196 residues: Protein GrpE (196 aa).

A disordered region spans residues 1–24; that stretch reads MAENERTTENFQPQDPSYAEAATT.

It belongs to the GrpE family. Homodimer.

Its subcellular location is the cytoplasm. Functionally, participates actively in the response to hyperosmotic and heat shock by preventing the aggregation of stress-denatured proteins, in association with DnaK and GrpE. It is the nucleotide exchange factor for DnaK and may function as a thermosensor. Unfolded proteins bind initially to DnaJ; upon interaction with the DnaJ-bound protein, DnaK hydrolyzes its bound ATP, resulting in the formation of a stable complex. GrpE releases ADP from DnaK; ATP binding to DnaK triggers the release of the substrate protein, thus completing the reaction cycle. Several rounds of ATP-dependent interactions between DnaJ, DnaK and GrpE are required for fully efficient folding. The polypeptide is Protein GrpE (Gloeobacter violaceus (strain ATCC 29082 / PCC 7421)).